Consider the following 125-residue polypeptide: Classical arabinogalactan protein 27 (125 aa).

An N-terminal signal peptide occupies residues 1–21 (MASSILLTLITFIFLSSLSLS). A compositionally biased stretch (low complexity) spans 20–36 (LSSPTTNTIPSSQTISP). The disordered stretch occupies residues 20–95 (LSSPTTNTIP…ASPPASSLAS (76 aa)). Residues 53–66 (AVSSTQTIPSSSTL) show a composition bias toward polar residues. Residues 77 to 95 (DPDPAFAPSASPPASSLAS) show a composition bias toward low complexity. Ser98 carries the GPI-anchor amidated serine lipid modification. Residues 99-125 (QAPGVFIYFVFAAVYCFSLRLLAVSAI) constitute a propeptide, removed in mature form.

The protein belongs to the classical AGP family. Post-translationally, O-glycosylated on the hydroxyproline residues.

The protein resides in the cell membrane. In terms of biological role, proteoglycan that seems to be implicated in diverse developmental roles such as differentiation, cell-cell recognition, embryogenesis and programmed cell death. The protein is Classical arabinogalactan protein 27 (AGP27) of Arabidopsis thaliana (Mouse-ear cress).